We begin with the raw amino-acid sequence, 492 residues long: Putative sucrose transport protein SUC6 (492 aa).

The segment at 1 to 26 (MSDLQANKDAAAVNRQSSSSSADLNG) is disordered. Residues 1–33 (MSDLQANKDAAAVNRQSSSSSADLNGPSPMRKM) lie on the Cytoplasmic side of the membrane. The segment covering 14–23 (NRQSSSSSAD) has biased composition (polar residues). At Ser17 the chain carries Phosphoserine. Residues 34-54 (ISVASIAAGIQFGWALQLSLL) form a helical membrane-spanning segment. Residues 55 to 68 (TPYVQLLGVPHKWS) are Extracellular-facing. The helical transmembrane segment at 69–89 (SFIWLCGPVSGLLVQPSVGYF) threads the bilayer. The Cytoplasmic segment spans residues 90-101 (SDRCKSRFGRRR). A helical membrane pass occupies residues 102–122 (PFIAMGALLVAVAVVLIGYAA). The Extracellular segment spans residues 123–139 (DFGHSMGDKVDEPVKMR). A helical transmembrane segment spans residues 140–160 (AVVIFALGFWILDVANNTLQG). At 161-181 (PCRAFLGDLAAGDAKKTRTAN) the chain is on the cytoplasmic side. The helical transmembrane segment at 182–202 (AFFSFFMAVGNVLGYAAGSYT) threads the bilayer. Residues 203 to 224 (NLYKIFPFTMTKACDIYCANLK) are Extracellular-facing. The chain crosses the membrane as a helical span at residues 225–245 (SCFFLSITLLLVVTIIALWYV). The Cytoplasmic segment spans residues 246-277 (EDKQWSPKADSDNEKTPFFGEIFGAFKVMKRP). The chain crosses the membrane as a helical span at residues 278–298 (MWMLLIVTALNWIAWFPFLLY). Residues 299-324 (DTDWMGREVYGGDSKGDDKMKKLYNQ) lie on the Extracellular side of the membrane. A helical membrane pass occupies residues 325–345 (GIHVGGLGLMLNSIVLGFMSL). The Cytoplasmic portion of the chain corresponds to 346–359 (GIEGISRKMGGAKR). The helical transmembrane segment at 360 to 380 (LWGAVNIILAVCLAMTVLVTK) threads the bilayer. The Extracellular portion of the chain corresponds to 381–403 (KAEEHRRIAGPMALPTDGIRAGA). A helical membrane pass occupies residues 404-424 (LTLFALLGIPLAITFSIPFAL). The Cytoplasmic portion of the chain corresponds to 425–446 (ASIISSSSGAGQGLSLGVLNMT). Residues 447–467 (IVIPQMVVSFGVGPIDALFGG) form a helical membrane-spanning segment. At 468–469 (GN) the chain is on the extracellular side. A helical transmembrane segment spans residues 470 to 490 (LPGFVVGAIAAAISSVVAFSV). Residues 491–492 (LP) are Cytoplasmic-facing.

Belongs to the glycoside-pentoside-hexuronide (GPH) cation symporter transporter (TC 2.A.2.4) family.

Its subcellular location is the cell membrane. It participates in glycan biosynthesis; sucrose metabolism. Functionally, may be responsible for the transport of glucosides into the cell, with the concomitant uptake of protons (symport system). Does not seem to transport sucrose. The protein is Putative sucrose transport protein SUC6 of Arabidopsis thaliana (Mouse-ear cress).